A 272-amino-acid polypeptide reads, in one-letter code: Bis(5'-nucleosyl)-tetraphosphatase, symmetrical (272 aa).

It belongs to the Ap4A hydrolase family.

The catalysed reaction is P(1),P(4)-bis(5'-adenosyl) tetraphosphate + H2O = 2 ADP + 2 H(+). Its function is as follows. Hydrolyzes diadenosine 5',5'''-P1,P4-tetraphosphate to yield ADP. In Wigglesworthia glossinidia brevipalpis, this protein is Bis(5'-nucleosyl)-tetraphosphatase, symmetrical.